Reading from the N-terminus, the 142-residue chain is Large ribosomal subunit protein uL13 (142 aa).

Belongs to the universal ribosomal protein uL13 family. In terms of assembly, part of the 50S ribosomal subunit.

Its function is as follows. This protein is one of the early assembly proteins of the 50S ribosomal subunit, although it is not seen to bind rRNA by itself. It is important during the early stages of 50S assembly. This Histophilus somni (strain 129Pt) (Haemophilus somnus) protein is Large ribosomal subunit protein uL13.